Consider the following 452-residue polypeptide: tRNA modification GTPase MnmE (452 aa).

3 residues coordinate (6S)-5-formyl-5,6,7,8-tetrahydrofolate: Arg21, Glu78, and Lys118. The TrmE-type G domain occupies 214–375 (GMKVVIAGRP…LRDHLKQAMG (162 aa)). K(+) is bound at residue Asn224. Residues 224 to 229 (NAGKSS), 243 to 249 (TDIAGTT), and 268 to 271 (DTAG) each bind GTP. Ser228 is a Mg(2+) binding site. K(+) contacts are provided by Thr243, Ile245, and Thr248. Thr249 serves as a coordination point for Mg(2+). Lys452 contributes to the (6S)-5-formyl-5,6,7,8-tetrahydrofolate binding site.

This sequence belongs to the TRAFAC class TrmE-Era-EngA-EngB-Septin-like GTPase superfamily. TrmE GTPase family. Homodimer. Heterotetramer of two MnmE and two MnmG subunits. The cofactor is K(+).

Its subcellular location is the cytoplasm. Its function is as follows. Exhibits a very high intrinsic GTPase hydrolysis rate. Involved in the addition of a carboxymethylaminomethyl (cmnm) group at the wobble position (U34) of certain tRNAs, forming tRNA-cmnm(5)s(2)U34. The protein is tRNA modification GTPase MnmE of Haemophilus influenzae (strain 86-028NP).